Here is a 433-residue protein sequence, read N- to C-terminus: Homogentisate 1,2-dioxygenase (433 aa).

The active-site Proton acceptor is His-288. 2 residues coordinate Fe cation: His-331 and Glu-337. Homogentisate contacts are provided by Tyr-346 and His-367. His-367 contributes to the Fe cation binding site.

The protein belongs to the homogentisate dioxygenase family. In terms of assembly, hexamer; dimer of trimers. It depends on Fe cation as a cofactor.

It catalyses the reaction homogentisate + O2 = 4-maleylacetoacetate + H(+). It functions in the pathway amino-acid degradation; L-phenylalanine degradation; acetoacetate and fumarate from L-phenylalanine: step 4/6. Functionally, involved in the catabolism of homogentisate (2,5-dihydroxyphenylacetate or 2,5-OH-PhAc), a central intermediate in the degradation of phenylalanine and tyrosine. Catalyzes the oxidative ring cleavage of the aromatic ring of homogentisate to yield maleylacetoacetate. This chain is Homogentisate 1,2-dioxygenase, found in Pseudomonas putida (strain GB-1).